A 105-amino-acid polypeptide reads, in one-letter code: BLOC-1-related complex subunit 7 (105 aa).

Belongs to the BORCS7 family. Component of the BLOC-one-related complex (BORC) which is composed of BLOC1S1, BLOC1S2, BORCS5, BORCS6, BORCS7, BORCS8, KXD1 and SNAPIN.

The protein localises to the lysosome membrane. In terms of biological role, as part of the BORC complex may play a role in lysosomes movement and localization at the cell periphery. Associated with the cytosolic face of lysosomes, the BORC complex may recruit ARL8B and couple lysosomes to microtubule plus-end-directed kinesin motor. The protein is BLOC-1-related complex subunit 7 of Bos taurus (Bovine).